A 499-amino-acid chain; its full sequence is Glycerol kinase (499 aa).

Residue Thr13 participates in ADP binding. Residues Thr13, Thr14, and Ser15 each contribute to the ATP site. Residue Thr13 participates in sn-glycerol 3-phosphate binding. Residue Arg17 coordinates ADP. Positions 83, 84, 135, and 245 each coordinate sn-glycerol 3-phosphate. Arg83, Glu84, Tyr135, Asp245, and Gln246 together coordinate glycerol. ADP contacts are provided by Thr267 and Gly310. 4 residues coordinate ATP: Thr267, Gly310, Gln314, and Ala411. Residues Ala411 and Asn415 each contribute to the ADP site.

It belongs to the FGGY kinase family.

The enzyme catalyses glycerol + ATP = sn-glycerol 3-phosphate + ADP + H(+). It participates in polyol metabolism; glycerol degradation via glycerol kinase pathway; sn-glycerol 3-phosphate from glycerol: step 1/1. With respect to regulation, inhibited by fructose 1,6-bisphosphate (FBP). Key enzyme in the regulation of glycerol uptake and metabolism. Catalyzes the phosphorylation of glycerol to yield sn-glycerol 3-phosphate. The protein is Glycerol kinase of Xylella fastidiosa (strain M12).